A 612-amino-acid chain; its full sequence is Zinc metalloproteinase-disintegrin-like HV1 (612 aa).

A signal peptide spans 1 to 20 (MIQVLLVTICLAVFPYQGSS). Positions 21-188 (IILESGNVND…SIKEDSQSNL (168 aa)) are excised as a propeptide. The Peptidase M12B domain maps to 200 to 396 (KYVKFFLVAD…NMPQCILKKP (197 aa)). Asn-219 is a glycosylation site (N-linked (GlcNAc...) asparagine). Cystine bridges form between Cys-311-Cys-391, Cys-351-Cys-375, and Cys-353-Cys-358. His-336 provides a ligand contact to Zn(2+). The active site involves Glu-337. The Zn(2+) site is built by His-340 and His-346. The 86-residue stretch at 404–489 (PPVCGNYFVE…AECTDRFQRN (86 aa)) folds into the Disintegrin domain. Ca(2+)-binding residues include Val-406, Asn-409, Phe-411, Glu-413, Glu-416, and Asp-419. 14 cysteine pairs are disulfide-bonded: Cys-407-Cys-436, Cys-418-Cys-431, Cys-420-Cys-426, Cys-430-Cys-453, Cys-444-Cys-450, Cys-449-Cys-475, Cys-462-Cys-482, Cys-469-Cys-500, Cys-493-Cys-505, Cys-512-Cys-562, Cys-527-Cys-573, Cys-540-Cys-550, Cys-557-Cys-599, and Cys-593-Cys-605. Positions 468–470 (ECD) match the D/ECD-tripeptide motif. Ca(2+) is bound by residues Asp-470, Met-471, Asp-473, Asp-484, and Arg-485. The N-linked (GlcNAc...) asparagine glycan is linked to Asn-502. The N-linked (GlcNAc...) asparagine glycan is linked to Asn-609.

It belongs to the venom metalloproteinase (M12B) family. P-III subfamily. P-IIIc sub-subfamily. Homodimer; disulfide-linked. Zn(2+) serves as cofactor. As to expression, expressed by the venom gland.

The protein localises to the secreted. With respect to regulation, inhibited by EDTA and EGTA. Its function is as follows. Snake venom zinc metalloproteinase-disintegrin-like that potently activates prothrombin (F2). Does not elicit any hemorrhagic response. Barely inhibits collagen-induced platelet aggregation. Hydrolyzes the alpha-chain of fibrin and fibrinogen (FGA), without affecting the Bbeta- and gamma-chains. Induces apoptosis in cultured vascular endothelial cells. The sequence is that of Zinc metalloproteinase-disintegrin-like HV1 from Protobothrops flavoviridis (Habu).